The chain runs to 430 residues: Lipoyl synthase, mitochondrial (430 aa).

The N-terminal 29 residues, 1–29 (MASPVPIQRLQAPLRRSLARAAALSTRSY), are a transit peptide targeting the mitochondrion. Over residues 28–58 (SYATIPSGPSSQPTSQESSSAASASAPATKP) the composition is skewed to low complexity. The interval 28–62 (SYATIPSGPSSQPTSQESSSAASASAPATKPRPTY) is disordered. 7 residues coordinate [4Fe-4S] cluster: C142, C147, C153, C173, C177, C180, and S390. Residues 156-379 (GSNKAAATAT…RQRALDMGFL (224 aa)) form the Radical SAM core domain.

Belongs to the radical SAM superfamily. Lipoyl synthase family. It depends on [4Fe-4S] cluster as a cofactor.

It localises to the mitochondrion. The enzyme catalyses [[Fe-S] cluster scaffold protein carrying a second [4Fe-4S](2+) cluster] + N(6)-octanoyl-L-lysyl-[protein] + 2 oxidized [2Fe-2S]-[ferredoxin] + 2 S-adenosyl-L-methionine + 4 H(+) = [[Fe-S] cluster scaffold protein] + N(6)-[(R)-dihydrolipoyl]-L-lysyl-[protein] + 4 Fe(3+) + 2 hydrogen sulfide + 2 5'-deoxyadenosine + 2 L-methionine + 2 reduced [2Fe-2S]-[ferredoxin]. It participates in protein modification; protein lipoylation via endogenous pathway; protein N(6)-(lipoyl)lysine from octanoyl-[acyl-carrier-protein]: step 2/2. Its function is as follows. Catalyzes the radical-mediated insertion of two sulfur atoms into the C-6 and C-8 positions of the octanoyl moiety bound to the lipoyl domains of lipoate-dependent enzymes, thereby converting the octanoylated domains into lipoylated derivatives. The protein is Lipoyl synthase, mitochondrial of Neurospora crassa (strain ATCC 24698 / 74-OR23-1A / CBS 708.71 / DSM 1257 / FGSC 987).